The chain runs to 888 residues: Lon protease homolog 2, peroxisomal (888 aa).

The region spanning Leu11 to Leu255 is the Lon N-terminal domain. Gly408 to Thr415 provides a ligand contact to ATP. A Lon proteolytic domain is found at Val692–Gly877. Catalysis depends on residues Ser783 and Lys826. The Microbody targeting signal signature appears at Ser886–Leu888.

It belongs to the peptidase S16 family.

The protein resides in the peroxisome matrix. The enzyme catalyses Hydrolysis of proteins in presence of ATP.. Functionally, ATP-dependent serine protease that mediates the selective degradation of misfolded and unassembled polypeptides in the peroxisomal matrix. Necessary for type 2 peroxisome targeting signal (PTS2)-containing protein processing and facilitates peroxisome matrix protein import. This Arabidopsis thaliana (Mouse-ear cress) protein is Lon protease homolog 2, peroxisomal (LON2).